Here is a 366-residue protein sequence, read N- to C-terminus: Tyrosine--tRNA ligase (366 aa).

Residues Tyr41, Tyr167, Gln171, Asp174, and Gln189 each coordinate L-tyrosine. A 'KMSKS' region motif is present at residues 241–245 (KMSKS). An ATP-binding site is contributed by Lys244.

Belongs to the class-I aminoacyl-tRNA synthetase family. TyrS type 4 subfamily. As to quaternary structure, homodimer.

The protein localises to the cytoplasm. The catalysed reaction is tRNA(Tyr) + L-tyrosine + ATP = L-tyrosyl-tRNA(Tyr) + AMP + diphosphate + H(+). Catalyzes the attachment of tyrosine to tRNA(Tyr) in a two-step reaction: tyrosine is first activated by ATP to form Tyr-AMP and then transferred to the acceptor end of tRNA(Tyr). This Saccharolobus solfataricus (strain ATCC 35092 / DSM 1617 / JCM 11322 / P2) (Sulfolobus solfataricus) protein is Tyrosine--tRNA ligase.